A 223-amino-acid chain; its full sequence is Phosphoenolpyruvate guanylyltransferase (223 aa).

Phosphoenolpyruvate-binding residues include threonine 140, glycine 156, and serine 159.

This sequence belongs to the CofC family.

It carries out the reaction phosphoenolpyruvate + GTP + H(+) = enolpyruvoyl-2-diphospho-5'-guanosine + diphosphate. Its pathway is cofactor biosynthesis; coenzyme F420 biosynthesis. Functionally, guanylyltransferase that catalyzes the activation of phosphoenolpyruvate (PEP) as enolpyruvoyl-2-diphospho-5'-guanosine, via the condensation of PEP with GTP. It is involved in the biosynthesis of coenzyme F420, a hydride carrier cofactor. In Conexibacter woesei (strain DSM 14684 / CCUG 47730 / CIP 108061 / JCM 11494 / NBRC 100937 / ID131577), this protein is Phosphoenolpyruvate guanylyltransferase.